Here is a 166-residue protein sequence, read N- to C-terminus: Regulator of ribonuclease activity A (166 aa).

It belongs to the RraA family. Homotrimer. Binds to both RNA-binding sites in the C-terminal region of Rne and to RhlB.

The protein localises to the cytoplasm. In terms of biological role, globally modulates RNA abundance by binding to RNase E (Rne) and regulating its endonucleolytic activity. Can modulate Rne action in a substrate-dependent manner by altering the composition of the degradosome. Modulates RNA-binding and helicase activities of the degradosome. In Actinobacillus succinogenes (strain ATCC 55618 / DSM 22257 / CCUG 43843 / 130Z), this protein is Regulator of ribonuclease activity A.